Here is a 527-residue protein sequence, read N- to C-terminus: UPF0053 protein YegH (527 aa).

The next 7 helical transmembrane spans lie at I14 to L34, L51 to L71, F81 to A101, G122 to D142, I145 to I165, I185 to F205, and F207 to L227. CBS domains follow at residues M306–L366 and L371–V429.

Belongs to the UPF0053 family.

It localises to the cell membrane. The protein is UPF0053 protein YegH (yegH) of Shigella flexneri.